The chain runs to 382 residues: Alkanesulfonate monooxygenase (382 aa).

The protein belongs to the SsuD family.

The catalysed reaction is an alkanesulfonate + FMNH2 + O2 = an aldehyde + FMN + sulfite + H2O + 2 H(+). Catalyzes the desulfonation of aliphatic sulfonates. The chain is Alkanesulfonate monooxygenase from Pseudomonas sp.